We begin with the raw amino-acid sequence, 422 residues long: Histidine--tRNA ligase (422 aa).

Belongs to the class-II aminoacyl-tRNA synthetase family. Homodimer.

It is found in the cytoplasm. It catalyses the reaction tRNA(His) + L-histidine + ATP = L-histidyl-tRNA(His) + AMP + diphosphate + H(+). The sequence is that of Histidine--tRNA ligase from Syntrophomonas wolfei subsp. wolfei (strain DSM 2245B / Goettingen).